Here is a 40-residue protein sequence, read N- to C-terminus: Neutral phospholipase A2 homolog cannitoxin beta chain 2 (40 aa).

As to quaternary structure, heterotrimer of alpha, beta, and gamma chains; non-covalently linked. As to expression, expressed by the venom gland.

It is found in the secreted. In terms of biological role, heterotrimer: Snake venom phospholipase A2 (PLA2) heterotrimer that acts as a potent presynaptic neurotoxin by blocking synaptic transmission and synaptic vesicle recycling. Enzymatic activity is essential for the neurotoxic effects. May act by binding in a calcium-dependent fashion to neurotonal pentraxin-1 (NPTX1) and neurotonal pentraxin-2 (NPTX2), but not to neuronal pentraxin receptor (NPTXR). Also binds to taipoxin-associated calcium binding protein 49 (RCN2), a protein localized in the lumen of endoplasmic reticulum. Functionally, monomer (beta chain): Snake venom phospholipase A2 homolog that is neither toxic nor enzymatically active. Does not bind calcium. The chain is Neutral phospholipase A2 homolog cannitoxin beta chain 2 from Oxyuranus scutellatus canni (Papuan taipan).